The chain runs to 422 residues: 3-phosphoshikimate 1-carboxyvinyltransferase (422 aa).

Residues Lys-21, Ser-22, and Arg-26 each contribute to the 3-phosphoshikimate site. Lys-21 serves as a coordination point for phosphoenolpyruvate. Positions 93 and 121 each coordinate phosphoenolpyruvate. Residues Ser-166, Ser-167, Gln-168, Ser-194, Asp-310, and Lys-337 each contribute to the 3-phosphoshikimate site. Residue Gln-168 coordinates phosphoenolpyruvate. Catalysis depends on Asp-310, which acts as the Proton acceptor. The phosphoenolpyruvate site is built by Arg-341, Arg-382, and Lys-407.

It belongs to the EPSP synthase family. In terms of assembly, monomer.

The protein localises to the cytoplasm. The catalysed reaction is 3-phosphoshikimate + phosphoenolpyruvate = 5-O-(1-carboxyvinyl)-3-phosphoshikimate + phosphate. The protein operates within metabolic intermediate biosynthesis; chorismate biosynthesis. In terms of biological role, catalyzes the transfer of the enolpyruvyl moiety of phosphoenolpyruvate (PEP) to the 5-hydroxyl of shikimate-3-phosphate (S3P) to produce enolpyruvyl shikimate-3-phosphate and inorganic phosphate. The polypeptide is 3-phosphoshikimate 1-carboxyvinyltransferase (Methanoculleus marisnigri (strain ATCC 35101 / DSM 1498 / JR1)).